We begin with the raw amino-acid sequence, 69 residues long: Conotoxin AbVIE (69 aa).

A signal peptide spans 1–17; sequence VLIIAVLFLTACQLTTA. A propeptide spanning residues 18–40 is cleaved from the precursor; sequence ETSSRGKQKHRALRSTDKYSRMT. 3 cysteine pairs are disulfide-bonded: C43–C57, C50–C61, and C56–C66.

It belongs to the conotoxin O1 superfamily. As to expression, expressed by the venom duct.

It localises to the secreted. In Conus abbreviatus (Abbreviated cone), this protein is Conotoxin AbVIE.